The primary structure comprises 286 residues: Bifunctional protein FolD (286 aa).

NADP(+) contacts are provided by residues 166–168 and isoleucine 232; that span reads GAS.

This sequence belongs to the tetrahydrofolate dehydrogenase/cyclohydrolase family. Homodimer.

It carries out the reaction (6R)-5,10-methylene-5,6,7,8-tetrahydrofolate + NADP(+) = (6R)-5,10-methenyltetrahydrofolate + NADPH. The enzyme catalyses (6R)-5,10-methenyltetrahydrofolate + H2O = (6R)-10-formyltetrahydrofolate + H(+). The protein operates within one-carbon metabolism; tetrahydrofolate interconversion. Catalyzes the oxidation of 5,10-methylenetetrahydrofolate to 5,10-methenyltetrahydrofolate and then the hydrolysis of 5,10-methenyltetrahydrofolate to 10-formyltetrahydrofolate. This is Bifunctional protein FolD from Marinobacter nauticus (strain ATCC 700491 / DSM 11845 / VT8) (Marinobacter aquaeolei).